The primary structure comprises 393 residues: 2-nitroimidazole transporter (393 aa).

Residues 1–12 (MTCSTSLSGKNR) are Cytoplasmic-facing. The helical transmembrane segment at 13–33 (IVLIAGILMIATTLRVTFTGA) threads the bilayer. The Periplasmic portion of the chain corresponds to 34–52 (APLLDTIRSAYSLTTAQTG). Residues 53-73 (LLTTLPLLAFALISPLAAPVA) form a helical membrane-spanning segment. Topologically, residues 74 to 80 (RRFGMER) are cytoplasmic. A run of 2 helical transmembrane segments spans residues 81–101 (SLFA…LPSP) and 102–122 (YLLF…NVLL). Residues 123–140 (PGLIKRDFPHSVARLTGA) lie on the Cytoplasmic side of the membrane. A helical transmembrane segment spans residues 141–161 (YSLTMGAAAALGSAMVVPLAL). Topologically, residues 162–163 (NG) are periplasmic. The chain crosses the membrane as a helical span at residues 164–184 (FGWQGALLMLMCFPLLALFLW). Over 185–218 (LPQWRSQQHANLSTSRALHTRGIWRSPLAWQVTL) the chain is Cytoplasmic. Residues 219–239 (FLGINSLVYYVIIGWLPAILI) traverse the membrane as a helical segment. The Periplasmic portion of the chain corresponds to 240–249 (SHGYSEAQAG). Residues 250–270 (SLHGLLQLATAAPGLLIPLFL) traverse the membrane as a helical segment. Over 271 to 278 (HHVKDQRG) the chain is Cytoplasmic. A helical transmembrane segment spans residues 279–299 (IAAFVALMCAVGAVGLCFMPA). Topologically, residues 300–304 (HAITW) are periplasmic. The chain crosses the membrane as a helical span at residues 305-325 (TLLFGFGSGATMILGLTFIGL). Topologically, residues 326-334 (RASSAHQAA) are cytoplasmic. A helical membrane pass occupies residues 335-355 (ALSGMAQSVGYLLAACGPPLM). At 356 to 366 (GKIHDANGNWS) the chain is on the periplasmic side. A helical membrane pass occupies residues 367–387 (VPLMGVAILSLLMAIFGLCAG). The Cytoplasmic portion of the chain corresponds to 388–393 (RDKEIR).

Belongs to the major facilitator superfamily. Cyanate porter (TC 2.A.1.17) family.

Its subcellular location is the cell inner membrane. Involved in efflux of 2-nitroimidazole. This Escherichia coli (strain K12) protein is 2-nitroimidazole transporter.